The primary structure comprises 206 residues: Uridine kinase (206 aa).

9–16 is a binding site for ATP; the sequence is GGSGSGKT.

It belongs to the uridine kinase family.

It is found in the cytoplasm. It carries out the reaction uridine + ATP = UMP + ADP + H(+). The catalysed reaction is cytidine + ATP = CMP + ADP + H(+). The protein operates within pyrimidine metabolism; CTP biosynthesis via salvage pathway; CTP from cytidine: step 1/3. Its pathway is pyrimidine metabolism; UMP biosynthesis via salvage pathway; UMP from uridine: step 1/1. This chain is Uridine kinase, found in Borrelia turicatae (strain 91E135).